We begin with the raw amino-acid sequence, 199 residues long: NAD(P)H dehydrogenase (quinone) (199 aa).

Positions 4–190 (VLVLYYSSYG…TGARYQGRKI (187 aa)) constitute a Flavodoxin-like domain. FMN is bound by residues 10–15 (SSYGHL) and 78–80 (TRF). Tyr12 is a binding site for NAD(+). Residue Trp98 participates in substrate binding. Residues 113–119 (STATQHG) and His134 contribute to the FMN site.

The protein belongs to the WrbA family. FMN serves as cofactor.

The catalysed reaction is a quinone + NADH + H(+) = a quinol + NAD(+). It carries out the reaction a quinone + NADPH + H(+) = a quinol + NADP(+). In Caulobacter vibrioides (strain ATCC 19089 / CIP 103742 / CB 15) (Caulobacter crescentus), this protein is NAD(P)H dehydrogenase (quinone).